The sequence spans 102 residues: Small ribosomal subunit protein uS10 (102 aa).

The protein belongs to the universal ribosomal protein uS10 family. Part of the 30S ribosomal subunit.

Involved in the binding of tRNA to the ribosomes. This is Small ribosomal subunit protein uS10 from Lactobacillus delbrueckii subsp. bulgaricus (strain ATCC 11842 / DSM 20081 / BCRC 10696 / JCM 1002 / NBRC 13953 / NCIMB 11778 / NCTC 12712 / WDCM 00102 / Lb 14).